The chain runs to 142 residues: Small ribosomal subunit protein bS18c (142 aa).

The interval 1–21 is disordered; the sequence is MDRITGPFRKSKKSFRKPLPP.

This sequence belongs to the bacterial ribosomal protein bS18 family. Part of the 30S ribosomal subunit.

The protein resides in the plastid. This Cuscuta gronovii (Common dodder) protein is Small ribosomal subunit protein bS18c.